A 179-amino-acid chain; its full sequence is MASSATMLSSVATAACVAPAQASMVAPFVGLKSASAFPVTQKTVTGLSTLPSNGGRVQCMKVWPIVGLKKFETLSYLPTLSVESLLKQIEYLIRNGWVPCLEFSLEGFVSRDNNKSPGYYDGRYWTMWKLPMFGCTDAAQVVKEAAECKKEYPAAFIRVIGFDNVRQVQCVSFIVEKPE.

The N-terminal 58 residues, 1-58 (MASSATMLSSVATAACVAPAQASMVAPFVGLKSASAFPVTQKTVTGLSTLPSNGGRVQ), are a transit peptide targeting the chloroplast.

Belongs to the RuBisCO small chain family. Heterohexadecamer of 8 large and 8 small subunits.

It localises to the plastid. Its subcellular location is the chloroplast. Functionally, ruBisCO catalyzes two reactions: the carboxylation of D-ribulose 1,5-bisphosphate, the primary event in carbon dioxide fixation, as well as the oxidative fragmentation of the pentose substrate. Both reactions occur simultaneously and in competition at the same active site. Although the small subunit is not catalytic it is essential for maximal activity. In Fritillaria agrestis (Stinkbells), this protein is Ribulose bisphosphate carboxylase small subunit, chloroplastic 2.